Consider the following 109-residue polypeptide: UPF0060 membrane protein PA14_21660 (109 aa).

Transmembrane regions (helical) follow at residues 5–25 (LWFVLAAFCEIAGCYAFYLWL), 27–47 (LGKSALWVLPGLLSLTLFALL), 59–79 (AYAAYGGIYVAASLFWLAFVE), and 84–104 (LWSDWLGVALCVVGASVVLFG).

The protein belongs to the UPF0060 family.

Its subcellular location is the cell inner membrane. In Pseudomonas aeruginosa (strain UCBPP-PA14), this protein is UPF0060 membrane protein PA14_21660.